A 98-amino-acid chain; its full sequence is NADH-ubiquinone oxidoreductase chain 4L (98 aa).

3 helical membrane-spanning segments follow: residues 2–22 (PFIY…LLLF), 30–50 (LLCL…TTLG), and 61–81 (IILM…LVTI).

This sequence belongs to the complex I subunit 4L family. In terms of assembly, core subunit of respiratory chain NADH dehydrogenase (Complex I) which is composed of 45 different subunits.

The protein localises to the mitochondrion inner membrane. It catalyses the reaction a ubiquinone + NADH + 5 H(+)(in) = a ubiquinol + NAD(+) + 4 H(+)(out). Functionally, core subunit of the mitochondrial membrane respiratory chain NADH dehydrogenase (Complex I) which catalyzes electron transfer from NADH through the respiratory chain, using ubiquinone as an electron acceptor. Part of the enzyme membrane arm which is embedded in the lipid bilayer and involved in proton translocation. The sequence is that of NADH-ubiquinone oxidoreductase chain 4L (MT-ND4L) from Bradypus tridactylus (Pale-throated three-toed sloth).